Here is a 150-residue protein sequence, read N- to C-terminus: 3-dehydroquinate dehydratase (150 aa).

Tyr-26 acts as the Proton acceptor in catalysis. Substrate-binding residues include Asn-75, His-81, and Asp-88. The active-site Proton donor is His-101. Substrate is bound by residues 102 to 103 (LS) and Arg-112.

It belongs to the type-II 3-dehydroquinase family. Homododecamer.

It catalyses the reaction 3-dehydroquinate = 3-dehydroshikimate + H2O. It participates in metabolic intermediate biosynthesis; chorismate biosynthesis; chorismate from D-erythrose 4-phosphate and phosphoenolpyruvate: step 3/7. Its function is as follows. Catalyzes a trans-dehydration via an enolate intermediate. The sequence is that of 3-dehydroquinate dehydratase from Shewanella loihica (strain ATCC BAA-1088 / PV-4).